We begin with the raw amino-acid sequence, 94 residues long: Co-chaperonin GroES (94 aa).

Heptamer of 7 subunits arranged in a ring. Interacts with the chaperonin GroEL.

Its subcellular location is the cytoplasm. Together with the chaperonin GroEL, plays an essential role in assisting protein folding. The GroEL-GroES system forms a nano-cage that allows encapsulation of the non-native substrate proteins and provides a physical environment optimized to promote and accelerate protein folding. GroES binds to the apical surface of the GroEL ring, thereby capping the opening of the GroEL channel. The chain is Co-chaperonin GroES from Thermoanaerobacter brockii (Thermoanaerobium brockii).